The following is a 314-amino-acid chain: Curved DNA-binding protein (314 aa).

The 65-residue stretch at 5 to 69 (DYYKILDVEP…EKRAEYDELR (65 aa)) folds into the J domain. Residues 73–92 (RQGRPFQTPPGWQSRAGAGA) form a disordered region.

It localises to the cytoplasm. Its subcellular location is the nucleoid. DNA-binding protein that preferentially recognizes a curved DNA sequence. It is probably a functional analog of DnaJ; displays overlapping activities with DnaJ, but functions under different conditions, probably acting as a molecular chaperone in an adaptive response to environmental stresses other than heat shock. Lacks autonomous chaperone activity; binds native substrates and targets them for recognition by DnaK. Its activity is inhibited by the binding of CbpM. This Pseudomonas syringae pv. tomato (strain ATCC BAA-871 / DC3000) protein is Curved DNA-binding protein.